Consider the following 192-residue polypeptide: Probable cobalt-precorrin-6B C(15)-methyltransferase (decarboxylating) (192 aa).

S-adenosyl-L-methionine contacts are provided by residues Thr-20, 44-48, Glu-68, and Ala-96; that span reads GSGTG.

It belongs to the methyltransferase superfamily. Archaeal-type CbiT family.

It carries out the reaction Co-precorrin-6B + S-adenosyl-L-methionine = Co-precorrin-7 + S-adenosyl-L-homocysteine + CO2. It participates in cofactor biosynthesis; adenosylcobalamin biosynthesis; cob(II)yrinate a,c-diamide from sirohydrochlorin (anaerobic route): step 8/10. Catalyzes the methylation of C-15 in cobalt-precorrin-6B followed by the decarboxylation of C-12 to form cobalt-precorrin-7. This chain is Probable cobalt-precorrin-6B C(15)-methyltransferase (decarboxylating), found in Sulfolobus acidocaldarius (strain ATCC 33909 / DSM 639 / JCM 8929 / NBRC 15157 / NCIMB 11770).